A 748-amino-acid chain; its full sequence is MAGSSGQQGKGRRVQPQWSPPAGTQPCRLHLYNSLTRNKEVFIPQDGKKVTWYCCGPTVYDASHMGHARSYISFDILRRVLKDYFKFDVFYCMNITDIDDKIIKRARQNHLFEQYLEKRPEAAQLLEDVQAALKPFSVKLNETTDPDKKQMLERIQHEVQLATEPLEKAVQSRLTGEEVNSCVEVLLEEAKDLLSDWLDSTLGSDVTDNSIFSKLPKFWEGEFHRDMEALNVLPPDVLTRVSEYVPEIVNFVQKIVDNGYGYVSDGSVYFDTAKFASSEKHSYGKLVPEAVGDQKALQEGEGDLSISADRLSEKRSPNDFALWKASKPGEPSWPCPWGKGRPGWHIECSAMAGTLLGASMDIHGGGFDLRFPHHDNELAQSEAYFENDCWVRYFLHTGHLTITGCKMSKSLKNFITIKDALKKHSARQLRLAFLMHSWKDTLDYSSNTMESALQYEKFLNEFFLNVKDILRAPVDITGQFEKWGEEEAELNKNFYDKKTAIHEALCDNVDTRTVMEEMRALVSQCNLYMAARKAMRKRPNRALLENIALYLTHMLKIFGAIEEESSLGFPVGGSGTSLNLESTVMPYLQVLSEFREGVRKIAREQKVPEVLQLSDALRDDILPELGVRFEDPEGLPTVVKLVDRNTLLKEREEKRQVEEEKRKKKEEAARRKQEQEAAKLAKMKIPPSEMFLSETDKYSKFDENGLPTHDAEGKELSKGQAKKVKKLFEAQEKLYKEYLQMPQNGSFQ.

Residues 1–25 (MAGSSGQQGKGRRVQPQWSPPAGTQ) are disordered. The residue at position 2 (alanine 2) is an N-acetylalanine. Serine 19 carries the post-translational modification Phosphoserine. Zn(2+) is bound at residue cysteine 55. Glycine 56 is a binding site for L-cysteine. A 'HIGH' region motif is present at residues 57-67 (PTVYDASHMGH). Threonine 96 is a binding site for L-cysteine. A 'KIIK' region motif is present at residues 101–104 (KIIK). A phosphoserine mark is found at serine 305 and serine 307. Zn(2+) contacts are provided by cysteine 348, histidine 373, and glutamate 377. Residue histidine 373 participates in L-cysteine binding. The short motif at 406-410 (KMSKS) is the 'KMSKS' region element. Position 409 (lysine 409) interacts with ATP. Basic and acidic residues-rich tracts occupy residues 654 to 679 (KRQV…EAAK) and 700 to 717 (KFDE…KELS). 2 disordered regions span residues 654 to 686 (KRQV…MKIP) and 700 to 721 (KFDE…KGQA). At serine 746 the chain carries Phosphoserine.

As to quaternary structure, homodimer. Zn(2+) serves as cofactor.

Its subcellular location is the cytoplasm. The catalysed reaction is tRNA(Cys) + L-cysteine + ATP = L-cysteinyl-tRNA(Cys) + AMP + diphosphate. Its function is as follows. Catalyzes the ATP-dependent ligation of cysteine to tRNA(Cys). The chain is Cysteine--tRNA ligase, cytoplasmic (CARS1) from Macaca fascicularis (Crab-eating macaque).